Reading from the N-terminus, the 378-residue chain is Transaldolase 1 (378 aa).

The active-site Schiff-base intermediate with substrate is the lysine 146.

Belongs to the transaldolase family. Type 2 subfamily.

The protein localises to the cytoplasm. It catalyses the reaction D-sedoheptulose 7-phosphate + D-glyceraldehyde 3-phosphate = D-erythrose 4-phosphate + beta-D-fructose 6-phosphate. It functions in the pathway carbohydrate degradation; pentose phosphate pathway; D-glyceraldehyde 3-phosphate and beta-D-fructose 6-phosphate from D-ribose 5-phosphate and D-xylulose 5-phosphate (non-oxidative stage): step 2/3. In terms of biological role, transaldolase is important for the balance of metabolites in the pentose-phosphate pathway. The chain is Transaldolase 1 from Streptomyces avermitilis (strain ATCC 31267 / DSM 46492 / JCM 5070 / NBRC 14893 / NCIMB 12804 / NRRL 8165 / MA-4680).